Reading from the N-terminus, the 107-residue chain is Cytochrome c2 (107 aa).

Q1 carries the post-translational modification Pyrrolidone carboxylic acid. Heme c-binding residues include C13, C16, H17, and M79.

It belongs to the cytochrome c family. In terms of processing, binds 1 heme c group covalently per subunit.

It is found in the periplasm. Cytochrome c2 is found mainly in purple, non-sulfur, photosynthetic bacteria where it functions as the electron donor to the oxidized bacteriochlorophyll in the photophosphorylation pathway. However, it may also have a role in the respiratory chain and is found in some non-photosynthetic bacteria. In Rhodoplanes tepidamans (Rhodoplanes cryptolactis), this protein is Cytochrome c2.